We begin with the raw amino-acid sequence, 428 residues long: Succinyl-CoA--L-malate CoA-transferase alpha subunit (428 aa).

A disordered region spans residues 1–31; sequence MPPTGEEPSGHAESKPPASDPMSTPGTGQEQ. Polar residues predominate over residues 21-31; it reads PMSTPGTGQEQ. D200 serves as the catalytic Nucleophile.

The protein belongs to the CoA-transferase III family. In terms of assembly, forms a large complex composed of six heterodimers (alpha, beta).

The catalysed reaction is succinyl-CoA + (S)-malate = (S)-malyl-CoA + succinate. The enzyme catalyses (3S)-citramalate + succinyl-CoA = (3S)-citramalyl-CoA + succinate. Involved in the 3-hydroxypropionate cycle used for autotrophic carbon dioxide fixation. Catalyzes the transfer of CoA moiety from succinyl-CoA to L-malate to yield L-malyl-CoA. It is highly specific for succinyl-CoA as the CoA donor, however it can accept L-citramalate instead of L-malate as the CoA acceptor. This chain is Succinyl-CoA--L-malate CoA-transferase alpha subunit (smtA), found in Chloroflexus aurantiacus.